The primary structure comprises 251 residues: Probable transcriptional regulatory protein Amuc_0709 (251 aa).

Belongs to the TACO1 family.

The protein resides in the cytoplasm. The protein is Probable transcriptional regulatory protein Amuc_0709 of Akkermansia muciniphila (strain ATCC BAA-835 / DSM 22959 / JCM 33894 / BCRC 81048 / CCUG 64013 / CIP 107961 / Muc).